The following is a 701-amino-acid chain: Alpha-1,4-glucan:maltose-1-phosphate maltosyltransferase (701 aa).

Positions 286-317 (HRKGRNNSPTAAPTDVGSPWAIGSDEGGHDTV) are disordered. Residues K288, Q348, and D383 each contribute to the alpha-maltose 1-phosphate site. D418 acts as the Nucleophile in catalysis. N419 lines the alpha-maltose 1-phosphate pocket. Residue E447 is the Proton donor of the active site. 557-558 (KY) contacts alpha-maltose 1-phosphate.

The protein belongs to the glycosyl hydrolase 13 family. GlgE subfamily. As to quaternary structure, homodimer.

The catalysed reaction is alpha-maltose 1-phosphate + [(1-&gt;4)-alpha-D-glucosyl](n) = [(1-&gt;4)-alpha-D-glucosyl](n+2) + phosphate. It participates in glycan biosynthesis; glycogen biosynthesis. Its function is as follows. Essential maltosyltransferase that uses maltose 1-phosphate (M1P) as the sugar donor to elongate linear or branched alpha-(1-&gt;4)-glucans. Maltooligosaccharides with a degree of polymerization (DP) superior or equal to 4 are efficient acceptors, with DP5 being optimal in the GlgE-catalyzed polymerization with M1P. Is specific for the alpha-anomer of M1P as substrate, since the beta-anomer of M1P gives no activity. Exhibits an alpha-retaining catalytic mechanism. Is also able to catalyze the reverse reaction in vitro, releasing M1P from glycogen in the presence of inorganic phosphate. Also catalyzes disproportionation reactions through maltosyl transfer between maltooligosaccharides. Is involved in a branched alpha-glucan biosynthetic pathway from trehalose, together with TreS, Mak and GlgB. This is Alpha-1,4-glucan:maltose-1-phosphate maltosyltransferase (glgE) from Mycobacterium tuberculosis (strain CDC 1551 / Oshkosh).